The chain runs to 191 residues: Putative glutathione-dependent formaldehyde-activating enzyme (191 aa).

Positions 20 to 166 constitute a CENP-V/GFA domain; the sequence is FAGGKLRCHC…FKALGLQTYD (147 aa). Residues Cys-27, Cys-29, Cys-48, Cys-50, Cys-53, Cys-95, and Cys-98 each contribute to the Zn(2+) site.

The protein belongs to the Gfa family. Zn(2+) is required as a cofactor.

The enzyme catalyses S-(hydroxymethyl)glutathione = glutathione + formaldehyde. It functions in the pathway one-carbon metabolism; formaldehyde degradation; formate from formaldehyde (glutathione route): step 1/3. Its function is as follows. Catalyzes the condensation of formaldehyde and glutathione to S-hydroxymethylglutathione. This Penicillium rubens (strain ATCC 28089 / DSM 1075 / NRRL 1951 / Wisconsin 54-1255) (Penicillium chrysogenum) protein is Putative glutathione-dependent formaldehyde-activating enzyme.